Here is a 554-residue protein sequence, read N- to C-terminus: Gamma-aminobutyric acid receptor subunit alpha-4 (554 aa).

Positions 1–35 are cleaved as a signal peptide; it reads MVSAKKVPAIALSAGVSFALLRFLCLAVCLNESPG. Residues 36–259 are Extracellular-facing; that stretch reads QNQKEEKLCT…FHLRRKMGYF (224 aa). N-linked (GlcNAc...) asparagine glycosylation occurs at asparagine 47. Arginine 100 provides a ligand contact to 4-aminobutanoate. N-linked (GlcNAc...) asparagine glycosylation is found at asparagine 144 and asparagine 157. Threonine 163 is a binding site for 4-aminobutanoate. Cysteines 172 and 186 form a disulfide. The helical transmembrane segment at 260 to 280 threads the bilayer; that stretch reads MIQTYIPCIMTVILSQVSFWI. Over 281–284 the chain is Cytoplasmic; the sequence is NKES. The chain crosses the membrane as a helical span at residues 285–305; that stretch reads VPARTVFGITTVLTMTTLSIS. Residues 306–318 lie on the Extracellular side of the membrane; sequence ARHSLPKVSYATA. A helical membrane pass occupies residues 319–341; the sequence is MDWFIAVCFAFVFSALIEFAAVN. At 342-517 the chain is on the cytoplasmic side; sequence YFTNIQMEKA…PPPSGSGTSK (176 aa). Disordered stretches follow at residues 350-381, 397-435, 452-471, and 495-515; these read KAKR…QNTN, ESDV…SPNP, PSAS…ASVG, and ATGK…GSGT. Residues 410-422 show a composition bias toward low complexity; it reads SSKSSTVVQESSK. Over residues 502–511 the composition is skewed to pro residues; the sequence is TPPPSAPPPS. The chain crosses the membrane as a helical span at residues 518–540; that stretch reads IDKYARILFPVTFGAFNMVYWVV. Residues 541–554 are Extracellular-facing; the sequence is YLSKDTMEKSESLM.

It belongs to the ligand-gated ion channel (TC 1.A.9) family. Gamma-aminobutyric acid receptor (TC 1.A.9.5) subfamily. GABRA4 sub-subfamily. In terms of assembly, heteropentamer, formed by a combination of alpha (GABRA1-6), beta (GABRB1-3), gamma (GABRG1-3), delta (GABRD), epsilon (GABRE), rho (GABRR1-3), pi (GABRP) and theta (GABRQ) chains, each subunit exhibiting distinct physiological and pharmacological properties. As to expression, expressed in the brain.

The protein localises to the cell membrane. The protein resides in the postsynaptic cell membrane. It catalyses the reaction chloride(in) = chloride(out). With respect to regulation, potentiated by histamine. Functionally, alpha subunit of the heteropentameric ligand-gated chloride channel gated by gamma-aminobutyric acid (GABA), a major inhibitory neurotransmitter in the brain. GABA-gated chloride channels, also named GABA(A) receptors (GABAAR), consist of five subunits arranged around a central pore and contain GABA active binding site(s) located at the alpha and beta subunit interface(s). When activated by GABA, GABAARs selectively allow the flow of chloride anions across the cell membrane down their electrochemical gradient. GABAARs containing alpha-4 are predominantly extrasynaptic, contributing to tonic inhibition in dentate granule cells and thalamic relay neurons. Extrasynaptic alpha-4-containing GABAARs control levels of excitability and network activity. GABAAR containing alpha-4-beta-3-delta subunits can simultaneously bind GABA and histamine where histamine binds at the interface of two neighboring beta subunits, which may be involved in the regulation of sleep and wakefulness. This chain is Gamma-aminobutyric acid receptor subunit alpha-4, found in Homo sapiens (Human).